The following is a 376-amino-acid chain: Fibromodulin (376 aa).

The N-terminal stretch at methionine 1–alanine 18 is a signal peptide. Position 19 is a pyrrolidone carboxylic acid (glutamine 19). Residues tyrosine 20, tyrosine 38, tyrosine 39, tyrosine 45, tyrosine 47, tyrosine 53, and tyrosine 55 each carry the sulfotyrosine modification. In terms of domain architecture, LRRNT spans serine 67–serine 105. LRR repeat units lie at residues arginine 106 to asparagine 127, glycine 130 to phenylalanine 151, histidine 156 to arginine 176, serine 177 to glycine 198, asparagine 201 to leucine 222, serine 224 to alanine 245, leucine 246 to glycine 266, and lysine 269 to threonine 289. Asparagine 127 carries an N-linked (GlcNAc...) (keratan sulfate) asparagine glycan. A glycan (N-linked (GlcNAc...) (keratan sulfate) asparagine) is linked at asparagine 166. Asparagine 201 is a glycosylation site (N-linked (GlcNAc...) (keratan sulfate) asparagine). The N-linked (GlcNAc...) (keratan sulfate) asparagine glycan is linked to asparagine 291. 2 LRR repeats span residues serine 294–leucine 315 and glutamate 316–threonine 335. Residues cysteine 334 and cysteine 367 are joined by a disulfide bond. Asparagine 341 is a glycosylation site (N-linked (GlcNAc...) asparagine). Residues lysine 344 to proline 365 form an LRR 11 repeat.

It belongs to the small leucine-rich proteoglycan (SLRP) family. SLRP class II subfamily. Binds to type I and type II collagen. Binds keratan sulfate chains.

It is found in the secreted. The protein resides in the extracellular space. The protein localises to the extracellular matrix. In terms of biological role, affects the rate of fibrils formation. May have a primary role in collagen fibrillogenesis. This Homo sapiens (Human) protein is Fibromodulin (FMOD).